The following is a 177-amino-acid chain: Large ribosomal subunit protein uL6 (177 aa).

The protein belongs to the universal ribosomal protein uL6 family. As to quaternary structure, part of the 50S ribosomal subunit.

In terms of biological role, this protein binds to the 23S rRNA, and is important in its secondary structure. It is located near the subunit interface in the base of the L7/L12 stalk, and near the tRNA binding site of the peptidyltransferase center. The chain is Large ribosomal subunit protein uL6 from Rickettsia typhi (strain ATCC VR-144 / Wilmington).